The sequence spans 291 residues: Pantothenate synthetase (291 aa).

Position 30-37 (30-37) interacts with ATP; sequence MGYLHVGH. The active-site Proton donor is the histidine 37. Glutamine 61 contributes to the (R)-pantoate binding site. Glutamine 61 contributes to the beta-alanine binding site. 147 to 150 is a binding site for ATP; sequence GEKD. Glutamine 153 serves as a coordination point for (R)-pantoate. ATP contacts are provided by residues valine 176 and 184–187; that span reads CSSR.

This sequence belongs to the pantothenate synthetase family. In terms of assembly, homodimer.

The protein resides in the cytoplasm. It carries out the reaction (R)-pantoate + beta-alanine + ATP = (R)-pantothenate + AMP + diphosphate + H(+). The protein operates within cofactor biosynthesis; (R)-pantothenate biosynthesis; (R)-pantothenate from (R)-pantoate and beta-alanine: step 1/1. Functionally, catalyzes the condensation of pantoate with beta-alanine in an ATP-dependent reaction via a pantoyl-adenylate intermediate. This is Pantothenate synthetase from Rhizobium meliloti (strain 1021) (Ensifer meliloti).